A 645-amino-acid chain; its full sequence is Cilia- and flagella-associated protein 221 homolog (645 aa).

A disordered region spans residues 381–408 (GGAVHQPSAPVGSSSSGGGGGSDPAFKP). The tract at residues 428 to 435 (THQRLQRR) is interaction with calmodulin.

Belongs to the PCDP1 family. Interacts with calmodulin; calcium-dependent. Part of the PDCP1 complex composed of CFAP46, CFAP54, CFAP74 and CFAP221; the PDCP1 complex binds calmodulin.

The protein resides in the cytoplasm. The protein localises to the cytoskeleton. It localises to the cilium axoneme. Its function is as follows. May play a role in cilium morphogenesis. The sequence is that of Cilia- and flagella-associated protein 221 homolog from Chlamydomonas reinhardtii (Chlamydomonas smithii).